The chain runs to 38 residues: Anthranilate phosphoribosyltransferase (38 aa).

It belongs to the anthranilate phosphoribosyltransferase family. Homodimer.

It carries out the reaction N-(5-phospho-beta-D-ribosyl)anthranilate + diphosphate = 5-phospho-alpha-D-ribose 1-diphosphate + anthranilate. The protein operates within amino-acid biosynthesis; L-tryptophan biosynthesis; L-tryptophan from chorismate: step 2/5. Catalyzes the transfer of the phosphoribosyl group of 5-phosphorylribose-1-pyrophosphate (PRPP) to anthranilate to yield N-(5'-phosphoribosyl)-anthranilate (PRA). This chain is Anthranilate phosphoribosyltransferase (trpD), found in Serratia marcescens.